Consider the following 241-residue polypeptide: Carboxy-S-adenosyl-L-methionine synthase (241 aa).

S-adenosyl-L-methionine is bound by residues tyrosine 38, 63–65 (GCS), 88–89 (DN), 116–117 (DI), asparagine 131, and arginine 198.

The protein belongs to the class I-like SAM-binding methyltransferase superfamily. Cx-SAM synthase family. In terms of assembly, homodimer.

The catalysed reaction is prephenate + S-adenosyl-L-methionine = carboxy-S-adenosyl-L-methionine + 3-phenylpyruvate + H2O. Functionally, catalyzes the conversion of S-adenosyl-L-methionine (SAM) to carboxy-S-adenosyl-L-methionine (Cx-SAM). The protein is Carboxy-S-adenosyl-L-methionine synthase of Haemophilus influenzae (strain 86-028NP).